Reading from the N-terminus, the 275-residue chain is 2-dehydro-3-deoxyphosphooctonate aldolase (275 aa).

Belongs to the KdsA family.

Its subcellular location is the cytoplasm. It catalyses the reaction D-arabinose 5-phosphate + phosphoenolpyruvate + H2O = 3-deoxy-alpha-D-manno-2-octulosonate-8-phosphate + phosphate. The protein operates within carbohydrate biosynthesis; 3-deoxy-D-manno-octulosonate biosynthesis; 3-deoxy-D-manno-octulosonate from D-ribulose 5-phosphate: step 2/3. It participates in bacterial outer membrane biogenesis; lipopolysaccharide biosynthesis. The protein is 2-dehydro-3-deoxyphosphooctonate aldolase of Francisella philomiragia subsp. philomiragia (strain ATCC 25017 / CCUG 19701 / FSC 153 / O#319-036).